Here is a 538-residue protein sequence, read N- to C-terminus: Guanine nucleotide-binding protein-like 3 (538 aa).

The span at methionine 1–arginine 45 shows a compositional bias: basic residues. Disordered regions lie at residues methionine 1 to lysine 57 and glutamine 69 to lysine 126. The basic stretch occupies residues lysine 2 to lysine 46. Residues alanine 54–serine 95 are a coiled coil. The segment covering glutamine 69–glutamate 93 has biased composition (basic and acidic residues). Lysine 79 is subject to N6-acetyllysine. Lysine 91 is covalently cross-linked (Glycyl lysine isopeptide (Lys-Gly) (interchain with G-Cter in SUMO2)). 2 positions are modified to phosphoserine: serine 95 and serine 101. The segment covering arginine 114 to lysine 126 has biased composition (basic residues). Positions cysteine 129–serine 307 constitute a CP-type G domain. Asparagine 176–aspartate 179 is a GTP binding site. Glycyl lysine isopeptide (Lys-Gly) (interchain with G-Cter in SUMO2) cross-links involve residues lysine 177, lysine 248, lysine 262, and lysine 270. Residue glycine 256–serine 263 coordinates GTP. An intermediate region spans residues valine 277–serine 451. GTP is bound at residue aspartate 300–cysteine 303. Residues aspartate 460 to lysine 475 show a composition bias toward basic and acidic residues. The segment at aspartate 460–aspartate 532 is acidic. Positions aspartate 460–isoleucine 538 are disordered. A phosphoserine mark is found at serine 493, serine 505, and serine 518. Residues proline 506–serine 518 show a composition bias toward polar residues.

Belongs to the TRAFAC class YlqF/YawG GTPase family. As to quaternary structure, interacts with MDM2; this interaction stabilizes MDM2. Interaction with MDM2 occurs in the nucleoplasm and is triggered by a nucleolar release mechanism, such as mitosis-induced nucleolar disassembly. Indirectly interacts with TP53, via MDM2-binding. Interacts with TSC22D1 isoform 2. Expressed in the adult bone marrow population that is enriched in hematopoietic stem cells.

The protein resides in the nucleus. It is found in the nucleolus. In terms of biological role, may be required to maintain the proliferative capacity of stem cells. Stabilizes MDM2 by preventing its ubiquitination, and hence proteasomal degradation. This chain is Guanine nucleotide-binding protein-like 3 (Gnl3), found in Mus musculus (Mouse).